Consider the following 49-residue polypeptide: Large ribosomal subunit protein bL33A (49 aa).

The protein belongs to the bacterial ribosomal protein bL33 family.

This chain is Large ribosomal subunit protein bL33A, found in Staphylococcus aureus (strain Mu3 / ATCC 700698).